The chain runs to 471 residues: Glutamate--tRNA ligase (471 aa).

The 'HIGH' region signature appears at Pro9 to Gly19. Zn(2+) is bound by residues Cys98, Cys100, Cys125, and His127. The short motif at Lys237–Arg241 is the 'KMSKS' region element. Residue Lys240 coordinates ATP.

The protein belongs to the class-I aminoacyl-tRNA synthetase family. Glutamate--tRNA ligase type 1 subfamily. Monomer. Requires Zn(2+) as cofactor.

The protein localises to the cytoplasm. It catalyses the reaction tRNA(Glu) + L-glutamate + ATP = L-glutamyl-tRNA(Glu) + AMP + diphosphate. In terms of biological role, catalyzes the attachment of glutamate to tRNA(Glu) in a two-step reaction: glutamate is first activated by ATP to form Glu-AMP and then transferred to the acceptor end of tRNA(Glu). In Salmonella schwarzengrund (strain CVM19633), this protein is Glutamate--tRNA ligase.